The sequence spans 705 residues: Glycine--tRNA ligase beta subunit (705 aa).

This sequence belongs to the class-II aminoacyl-tRNA synthetase family. In terms of assembly, tetramer of two alpha and two beta subunits.

It localises to the cytoplasm. The catalysed reaction is tRNA(Gly) + glycine + ATP = glycyl-tRNA(Gly) + AMP + diphosphate. The chain is Glycine--tRNA ligase beta subunit from Persephonella marina (strain DSM 14350 / EX-H1).